Consider the following 220-residue polypeptide: 7-cyano-7-deazaguanine synthase (220 aa).

10-20 (FSGGQDSTTCL) contributes to the ATP binding site. Positions 186, 195, 198, and 201 each coordinate Zn(2+).

The protein belongs to the QueC family. In terms of assembly, homodimer. Zn(2+) serves as cofactor.

It catalyses the reaction 7-carboxy-7-deazaguanine + NH4(+) + ATP = 7-cyano-7-deazaguanine + ADP + phosphate + H2O + H(+). Its pathway is purine metabolism; 7-cyano-7-deazaguanine biosynthesis. Catalyzes the ATP-dependent conversion of 7-carboxy-7-deazaguanine (CDG) to 7-cyano-7-deazaguanine (preQ(0)). The sequence is that of 7-cyano-7-deazaguanine synthase from Bacillus mycoides (strain KBAB4) (Bacillus weihenstephanensis).